Reading from the N-terminus, the 412-residue chain is Histidine--tRNA ligase (412 aa).

Belongs to the class-II aminoacyl-tRNA synthetase family. As to quaternary structure, homodimer.

The protein localises to the cytoplasm. The enzyme catalyses tRNA(His) + L-histidine + ATP = L-histidyl-tRNA(His) + AMP + diphosphate + H(+). The sequence is that of Histidine--tRNA ligase from Rickettsia typhi (strain ATCC VR-144 / Wilmington).